Here is a 235-residue protein sequence, read N- to C-terminus: UPF0173 metal-dependent hydrolase mll0680 (235 aa).

It belongs to the UPF0173 family.

In Mesorhizobium japonicum (strain LMG 29417 / CECT 9101 / MAFF 303099) (Mesorhizobium loti (strain MAFF 303099)), this protein is UPF0173 metal-dependent hydrolase mll0680.